A 35-amino-acid polypeptide reads, in one-letter code: AACLGMFESCDPNNDKCCPNRECNRKHKWCKYKLW.

Disulfide bonds link Cys3–Cys18, Cys10–Cys23, and Cys17–Cys30.

It belongs to the neurotoxin 10 (Hwtx-1) family. 59 (Tltx) subfamily. In terms of assembly, monomer. As to expression, expressed by the venom gland.

It localises to the secreted. Blocks Kv4.2/KCND2 voltage-gated potassium channels (IC(50) is 193.0 nM) by shifting the voltage-dependence of channel activation to more depolarized potentials. The toxin is thought to bind to the S3-S4 linker region of the voltage sensor domain. The sequence is that of Kappa-theraphotoxin-Tb1a from Theraphosa blondi (Goliath birdeating spider).